We begin with the raw amino-acid sequence, 361 residues long: Carbamoyl phosphate synthase small chain (361 aa).

The tract at residues methionine 1–aspartate 173 is CPSase. L-glutamine contacts are provided by serine 45, glycine 225, and glycine 227. The region spanning glutamate 177–histidine 361 is the Glutamine amidotransferase type-1 domain. Catalysis depends on cysteine 252, which acts as the Nucleophile. Residues leucine 253, glutamine 256, asparagine 294, glycine 296, and phenylalanine 297 each coordinate L-glutamine. Residues histidine 337 and glutamate 339 contribute to the active site.

It belongs to the CarA family. Composed of two chains; the small (or glutamine) chain promotes the hydrolysis of glutamine to ammonia, which is used by the large (or ammonia) chain to synthesize carbamoyl phosphate. Tetramer of heterodimers (alpha,beta)4.

It catalyses the reaction hydrogencarbonate + L-glutamine + 2 ATP + H2O = carbamoyl phosphate + L-glutamate + 2 ADP + phosphate + 2 H(+). The catalysed reaction is L-glutamine + H2O = L-glutamate + NH4(+). It functions in the pathway amino-acid biosynthesis; L-arginine biosynthesis; carbamoyl phosphate from bicarbonate: step 1/1. The protein operates within pyrimidine metabolism; UMP biosynthesis via de novo pathway; (S)-dihydroorotate from bicarbonate: step 1/3. Functionally, small subunit of the glutamine-dependent carbamoyl phosphate synthetase (CPSase). CPSase catalyzes the formation of carbamoyl phosphate from the ammonia moiety of glutamine, carbonate, and phosphate donated by ATP, constituting the first step of 2 biosynthetic pathways, one leading to arginine and/or urea and the other to pyrimidine nucleotides. The small subunit (glutamine amidotransferase) binds and cleaves glutamine to supply the large subunit with the substrate ammonia. This chain is Carbamoyl phosphate synthase small chain, found in Methanopyrus kandleri (strain AV19 / DSM 6324 / JCM 9639 / NBRC 100938).